A 180-amino-acid chain; its full sequence is ATP synthase subunit b, chloroplastic (180 aa).

The helical transmembrane segment at 28 to 48 (VTTLINIGVVLCLLIIFGKGF) threads the bilayer.

The protein belongs to the ATPase B chain family. In terms of assembly, F-type ATPases have 2 components, F(1) - the catalytic core - and F(0) - the membrane proton channel. F(1) has five subunits: alpha(3), beta(3), gamma(1), delta(1), epsilon(1). F(0) has four main subunits: a(1), b(1), b'(1) and c(10-14). The alpha and beta chains form an alternating ring which encloses part of the gamma chain. F(1) is attached to F(0) by a central stalk formed by the gamma and epsilon chains, while a peripheral stalk is formed by the delta, b and b' chains.

The protein resides in the plastid. It is found in the chloroplast thylakoid membrane. In terms of biological role, f(1)F(0) ATP synthase produces ATP from ADP in the presence of a proton or sodium gradient. F-type ATPases consist of two structural domains, F(1) containing the extramembraneous catalytic core and F(0) containing the membrane proton channel, linked together by a central stalk and a peripheral stalk. During catalysis, ATP synthesis in the catalytic domain of F(1) is coupled via a rotary mechanism of the central stalk subunits to proton translocation. Its function is as follows. Component of the F(0) channel, it forms part of the peripheral stalk, linking F(1) to F(0). The sequence is that of ATP synthase subunit b, chloroplastic from Cuscuta obtusiflora (Peruvian dodder).